We begin with the raw amino-acid sequence, 185 residues long: Translocon-associated protein subunit gamma (185 aa).

M1 is subject to N-acetylmethionine. Residues 1-27 (MAPKGGSKQQSEEDLLLQDFSRNLSAK) lie on the Lumenal side of the membrane. Phosphoserine occurs at positions 7 and 11. The helical transmembrane segment at 28-48 (SSALFFGNAFIVSAIPIWLYW) threads the bilayer. Topologically, residues 49 to 54 (RIWHMD) are cytoplasmic. The helical transmembrane segment at 55–76 (LIQSAVLYSVMTLVSTYLVAFA) threads the bilayer. At 77-135 (YKNVKFVLKHKVAQKREDAVSKEVTRKLSEADNRKMSRKEKDERILWKKNEVADYEATT) the chain is on the lumenal side. S105 carries the post-translational modification Phosphoserine. The chain crosses the membrane as a helical span at residues 136-157 (FSIFYNNTLFLVLVIVASFFIL). Over 158–163 (KNFNPT) the chain is Cytoplasmic. A helical membrane pass occupies residues 164–184 (VNYILSISASSGLIALLSTGS).

The protein belongs to the TRAP-gamma family. Heterotetramer of TRAP-alpha, TRAP-beta, TRAP-delta and TRAP-gamma.

Its subcellular location is the endoplasmic reticulum membrane. Its function is as follows. TRAP proteins are part of a complex whose function is to bind calcium to the ER membrane and thereby regulate the retention of ER resident proteins. The protein is Translocon-associated protein subunit gamma (Ssr3) of Mus musculus (Mouse).